The chain runs to 179 residues: Large ribosomal subunit protein uL6 (179 aa).

Belongs to the universal ribosomal protein uL6 family. Part of the 50S ribosomal subunit.

Functionally, this protein binds to the 23S rRNA, and is important in its secondary structure. It is located near the subunit interface in the base of the L7/L12 stalk, and near the tRNA binding site of the peptidyltransferase center. This chain is Large ribosomal subunit protein uL6, found in Koribacter versatilis (strain Ellin345).